The primary structure comprises 349 residues: Glycerol-3-phosphate dehydrogenase [NAD(+)], cytoplasmic (349 aa).

10–15 (GSGNWG) is an NAD(+) binding site. Lys120 lines the substrate pocket. Position 153 (Ala153) interacts with NAD(+). A Phosphoserine modification is found at Ser154. The active-site Proton acceptor is the Lys204. Arg269 lines the NAD(+) pocket. Substrate is bound at residue 269 to 270 (RN). The residue at position 289 (Lys289) is an N6-succinyllysine. Residues Lys296 and Gln298 each contribute to the NAD(+) site. The residue at position 326 (Tyr326) is a Phosphotyrosine.

The protein belongs to the NAD-dependent glycerol-3-phosphate dehydrogenase family. As to quaternary structure, homodimer.

It localises to the cytoplasm. It catalyses the reaction sn-glycerol 3-phosphate + NAD(+) = dihydroxyacetone phosphate + NADH + H(+). Has glycerol-3-phosphate dehydrogenase activity. The sequence is that of Glycerol-3-phosphate dehydrogenase [NAD(+)], cytoplasmic (GPD1) from Pongo abelii (Sumatran orangutan).